A 348-amino-acid chain; its full sequence is GPALPP motifs-containing protein 1 (348 aa).

Disordered regions lie at residues 1–163 (MARD…AKGP) and 177–317 (QRMK…DLKV). Residue A2 is modified to N-acetylalanine. The GPALPP motif 1 motif lies at 7 to 12 (GPALPP). Basic and acidic residues predominate over residues 14-27 (FKERATVEDQERDP). Residue S28 is modified to Phosphoserine. A GPALPP motif 2 motif is present at residues 32-37 (GPALPP). Residues 41 to 59 (SSSSDSSDSNEDSSSLSEE) are compositionally biased toward low complexity. The segment covering 60–69 (GNQESEEDDA) has biased composition (acidic residues). The GPALPP motif 3 motif lies at 93–98 (GPALPP). Residue S106 is modified to Phosphoserine. A compositionally biased stretch (pro residues) spans 108–117 (PRPIIGPALP). The GPALPP motif 4 signature appears at 113–118 (GPALPP). Phosphoserine is present on residues S138, S143, and S148. The span at 144-154 (EEAESGEDEDI) shows a compositional bias: acidic residues. Basic and acidic residues-rich tracts occupy residues 177 to 195 (QRMK…KPVT), 235 to 269 (PADR…KRLA), 277 to 287 (ESKRSESLMDI), and 295 to 317 (KAAE…DLKV). Residues K279 and K316 each participate in a glycyl lysine isopeptide (Lys-Gly) (interchain with G-Cter in SUMO2) cross-link.

This chain is GPALPP motifs-containing protein 1 (Gpalpp1), found in Rattus norvegicus (Rat).